A 569-amino-acid polypeptide reads, in one-letter code: Vacuolar protein sorting-associated protein 53 B (569 aa).

Coiled-coil stretches lie at residues 53–90, 125–145, and 295–316; these read TRAKENLNDAICAAEELSHKIQEIKSKAEQTEAMVQDI, QVMTSKRQYKEAATQLEAINE, and KEKSDVEKLLLELKRTLEFERE.

Belongs to the VPS53 family. As to quaternary structure, component of the Golgi-associated retrograde protein (GARP) complex.

Its subcellular location is the cytoplasm. It is found in the golgi apparatus. The protein resides in the trans-Golgi network membrane. The protein localises to the endosome membrane. In terms of biological role, involved in retrograde transport from early and late endosomes to late Golgi, leading to the membrane fusion between late Golgi and endosomal vesicles. This is Vacuolar protein sorting-associated protein 53 B from Arabidopsis thaliana (Mouse-ear cress).